The primary structure comprises 342 residues: (+)-pulegone reductase (342 aa).

NADP(+) is bound by residues 163–166 (GSVG), Lys189, Tyr205, Asn229, 251–257 (CGMVSQY), 281–283 (FVV), and Asn331.

Belongs to the NADP-dependent oxidoreductase L4BD family.

The protein localises to the cytoplasm. It catalyses the reaction (2R,5R)-isomenthone + NADP(+) = (R)-pulegone + NADPH + H(+). It carries out the reaction (1R,4S)-menthone + NADP(+) = (R)-pulegone + NADPH + H(+). It functions in the pathway secondary metabolite biosynthesis; terpenoid biosynthesis. Its activity is regulated as follows. Not inhibited by (+)-menthofuran. In terms of biological role, monoterpene synthase that catalyzes the specific reduction of the 4,8-double bond of (+)-pulegone to produce both (-)-menthone and (+)-isomenthone in a 70:30 ratio. Unable to utilize either (-)-isopiperitenone or (+)-cis-isopulegone, or to catalyze the reverse reaction with (-)-menthone or (+)-isomenthone. Has an absolute requirement for NADPH. The chain is (+)-pulegone reductase from Mentha piperita (Peppermint).